A 506-amino-acid chain; its full sequence is GMP synthase [glutamine-hydrolyzing] (506 aa).

A Glutamine amidotransferase type-1 domain is found at 4–192 (KLIILDFGSQ…FLDICGMKRD (189 aa)). The Nucleophile role is filled by cysteine 79. Active-site residues include histidine 167 and glutamate 169. Residues 193-381 (WTPASFIEAT…LGMMPHLIHR (189 aa)) form the GMPS ATP-PPase domain. ATP is bound at residue 220–226 (SGGVDSS).

Homodimer.

The enzyme catalyses XMP + L-glutamine + ATP + H2O = GMP + L-glutamate + AMP + diphosphate + 2 H(+). It functions in the pathway purine metabolism; GMP biosynthesis; GMP from XMP (L-Gln route): step 1/1. Functionally, catalyzes the synthesis of GMP from XMP. The protein is GMP synthase [glutamine-hydrolyzing] of Porphyromonas gingivalis (strain ATCC BAA-308 / W83).